We begin with the raw amino-acid sequence, 1097 residues long: Leukemia inhibitory factor receptor (1097 aa).

The N-terminal stretch at 1 to 44 is a signal peptide; it reads MMNISLRLRRPPWMVDSNGRRMTSHFQWLLLTFILLYLMNQVTS. The Extracellular segment spans residues 45 to 833; it reads EKRGAPRDLK…SMFVVTKENS (789 aa). A Fibronectin type-III 1 domain is found at 46–131; the sequence is KRGAPRDLKC…ISKFTLNEKN (86 aa). 2 disulfides stabilise this stretch: Cys55–Cys65 and Cys82–Cys90. Asn85, Asn131, Asn143, Asn191, Asn243, and Asn303 each carry an N-linked (GlcNAc...) asparagine glycan. Cysteines 213 and 270 form a disulfide. Fibronectin type-III domains follow at residues 332–434, 435–534, 538–629, 627–719, and 724–833; these read PPDI…VYPR, IPTS…TEAI, GPDT…IPND, PNDD…IGYI, and PIVA…KENS. Cys341 and Cys351 are disulfide-bonded. N-linked (GlcNAc...) asparagine glycosylation is found at Asn366, Asn390, Asn407, Asn426, Asn445, Asn471, Asn481, and Asn489. The cysteines at positions 466 and 511 are disulfide-linked. The WSXWS motif motif lies at 519–523; sequence WSKWS. Asn572, Asn652, Asn663, Asn680, Asn729, and Asn787 each carry an N-linked (GlcNAc...) asparagine glycan. A helical membrane pass occupies residues 834-854; sequence VGLIIAILIPVAVAVIVGVVT. The Cytoplasmic segment spans residues 855–1097; it reads SILCYRKREW…TNFFQNKPND (243 aa). Positions 869–877 match the Box 1 motif motif; sequence FYPDIPNPE. Ser927 is subject to Phosphoserine. Disordered regions lie at residues 982–1005 and 1022–1097; these read QPQA…KPQM and LDKA…KPND. Polar residues-rich tracts occupy residues 1032–1067 and 1086–1097; these read ANVN…NSRQ and SFTNFFQNKPND. Ser1044 is subject to Phosphoserine.

Belongs to the type I cytokine receptor family. Type 2 subfamily. As to quaternary structure, heterodimer composed of LIFR and IL6ST. The heterodimer formed by LIFR and IL6ST interacts with the complex formed by CNTF and CNTFR.

Its subcellular location is the cell membrane. Its function is as follows. Signal-transducing molecule. May have a common pathway with IL6ST. The soluble form inhibits the biological activity of LIF by blocking its binding to receptors on target cells. In Canis lupus familiaris (Dog), this protein is Leukemia inhibitory factor receptor (LIFR).